Reading from the N-terminus, the 359-residue chain is Membrane-bound lytic murein transglycosylase C (359 aa).

The N-terminal stretch at 1–16 is a signal peptide; it reads MKKYLALALIAPLLIS. C17 carries N-palmitoyl cysteine lipidation. C17 carries S-diacylglycerol cysteine lipidation.

It belongs to the transglycosylase Slt family.

It localises to the cell outer membrane. It catalyses the reaction Exolytic cleavage of the (1-&gt;4)-beta-glycosidic linkage between N-acetylmuramic acid (MurNAc) and N-acetylglucosamine (GlcNAc) residues in peptidoglycan, from either the reducing or the non-reducing ends of the peptidoglycan chains, with concomitant formation of a 1,6-anhydrobond in the MurNAc residue.. Functionally, murein-degrading enzyme. May play a role in recycling of muropeptides during cell elongation and/or cell division. This chain is Membrane-bound lytic murein transglycosylase C, found in Escherichia fergusonii (strain ATCC 35469 / DSM 13698 / CCUG 18766 / IAM 14443 / JCM 21226 / LMG 7866 / NBRC 102419 / NCTC 12128 / CDC 0568-73).